We begin with the raw amino-acid sequence, 604 residues long: UvrABC system protein C (604 aa).

Residues 13 to 92 (ASPGVYLMKD…IKKYHPKYNV (80 aa)) form the GIY-YIG domain. The 36-residue stretch at 205-240 (SEIVQDLEKSIEKASKEQKFEQAGMYYRTLKLIQQA) folds into the UVR domain.

It belongs to the UvrC family. In terms of assembly, interacts with UvrB in an incision complex.

It localises to the cytoplasm. The UvrABC repair system catalyzes the recognition and processing of DNA lesions. UvrC both incises the 5' and 3' sides of the lesion. The N-terminal half is responsible for the 3' incision and the C-terminal half is responsible for the 5' incision. The sequence is that of UvrABC system protein C from Chlamydia abortus (strain DSM 27085 / S26/3) (Chlamydophila abortus).